The sequence spans 426 residues: Tol-Pal system protein TolB (426 aa).

The N-terminal stretch at 1–25 (MSITPSLSRRTVMSLLAAGLSPAFA) is a signal peptide.

This sequence belongs to the TolB family. The Tol-Pal system is composed of five core proteins: the inner membrane proteins TolA, TolQ and TolR, the periplasmic protein TolB and the outer membrane protein Pal. They form a network linking the inner and outer membranes and the peptidoglycan layer.

Its subcellular location is the periplasm. Functionally, part of the Tol-Pal system, which plays a role in outer membrane invagination during cell division and is important for maintaining outer membrane integrity. In Polaromonas sp. (strain JS666 / ATCC BAA-500), this protein is Tol-Pal system protein TolB.